A 433-amino-acid chain; its full sequence is Probable mannose-6-phosphate isomerase (433 aa).

Positions 103, 105, 130, and 277 each coordinate Zn(2+). Arg296 is a catalytic residue.

It belongs to the mannose-6-phosphate isomerase type 1 family. Zn(2+) serves as cofactor.

It localises to the cytoplasm. The enzyme catalyses D-mannose 6-phosphate = D-fructose 6-phosphate. It functions in the pathway nucleotide-sugar biosynthesis; GDP-alpha-D-mannose biosynthesis; alpha-D-mannose 1-phosphate from D-fructose 6-phosphate: step 1/2. Functionally, involved in the synthesis of the GDP-mannose and dolichol-phosphate-mannose required for a number of critical mannosyl transfer reactions. The protein is Probable mannose-6-phosphate isomerase (PMIH) of Echinococcus multilocularis (Fox tapeworm).